Here is a 538-residue protein sequence, read N- to C-terminus: Cytochrome P450 52A4 (538 aa).

Residues 27 to 46 form a helical membrane-spanning segment; sequence WYILIPTILLTLNFLSILHT. Cysteine 485 contributes to the heme binding site.

Belongs to the cytochrome P450 family. Heme is required as a cofactor.

It localises to the membrane. Its function is as follows. Together with an NADPH cytochrome P450 the enzyme system catalyzes the terminal hydroxylation as the first step in the assimilation of alkanes and fatty acids. The sequence is that of Cytochrome P450 52A4 (CYP52A4) from Candida maltosa (Yeast).